The sequence spans 380 residues: Erythronate-4-phosphate dehydrogenase (380 aa).

Substrate-binding residues include Ser-45 and Thr-66. Asp-146 contributes to the NAD(+) binding site. The active site involves Arg-207. Residue Asp-232 participates in NAD(+) binding. Glu-237 is a catalytic residue. Catalysis depends on His-254, which acts as the Proton donor. NAD(+) is bound at residue Gly-257. Residue Tyr-258 coordinates substrate.

The protein belongs to the D-isomer specific 2-hydroxyacid dehydrogenase family. PdxB subfamily. As to quaternary structure, homodimer.

Its subcellular location is the cytoplasm. The catalysed reaction is 4-phospho-D-erythronate + NAD(+) = (R)-3-hydroxy-2-oxo-4-phosphooxybutanoate + NADH + H(+). Its pathway is cofactor biosynthesis; pyridoxine 5'-phosphate biosynthesis; pyridoxine 5'-phosphate from D-erythrose 4-phosphate: step 2/5. Functionally, catalyzes the oxidation of erythronate-4-phosphate to 3-hydroxy-2-oxo-4-phosphonooxybutanoate. This Marinomonas sp. (strain MWYL1) protein is Erythronate-4-phosphate dehydrogenase.